The primary structure comprises 214 residues: A-type ATP synthase subunit D (214 aa).

Belongs to the V-ATPase D subunit family. Has multiple subunits with at least A(3), B(3), C, D, E, F, H, I and proteolipid K(x).

It localises to the cell membrane. Component of the A-type ATP synthase that produces ATP from ADP in the presence of a proton gradient across the membrane. The sequence is that of A-type ATP synthase subunit D from Methanosphaera stadtmanae (strain ATCC 43021 / DSM 3091 / JCM 11832 / MCB-3).